The sequence spans 529 residues: Isoleucine--tRNA ligase (529 aa).

Glu482 is a binding site for L-isoleucyl-5'-AMP. The 'KMSKS' region signature appears at 523 to 527 (KMSKS). Residue Lys526 coordinates ATP.

Belongs to the class-I aminoacyl-tRNA synthetase family. IleS type 1 subfamily. Monomer.

The protein localises to the cytoplasm. It carries out the reaction tRNA(Ile) + L-isoleucine + ATP = L-isoleucyl-tRNA(Ile) + AMP + diphosphate. Functionally, catalyzes the attachment of isoleucine to tRNA(Ile). As IleRS can inadvertently accommodate and process structurally similar amino acids such as valine, to avoid such errors it has two additional distinct tRNA(Ile)-dependent editing activities. One activity is designated as 'pretransfer' editing and involves the hydrolysis of activated Val-AMP. The other activity is designated 'posttransfer' editing and involves deacylation of mischarged Val-tRNA(Ile). The protein is Isoleucine--tRNA ligase (ileS) of Aquifex pyrophilus.